The chain runs to 126 residues: Cysteine-rich tail protein 1 (126 aa).

The disordered stretch occupies residues M1–P89.

Belongs to the CYSRT1 family. In terms of assembly, interacts with components of the late cornfied envelope (LCE).

The protein localises to the cornified envelope. Functionally, component of the stratum corneum that may contribute to epidermal antimicrobial host defenses. The protein is Cysteine-rich tail protein 1 (CYSRT1) of Bos taurus (Bovine).